Reading from the N-terminus, the 283-residue chain is Phosphatidylserine decarboxylase proenzyme (283 aa).

Active-site charge relay system; for autoendoproteolytic cleavage activity residues include Asp96, His152, and Ser250. Ser250 (schiff-base intermediate with substrate; via pyruvic acid; for decarboxylase activity) is an active-site residue. Ser250 carries the pyruvic acid (Ser); by autocatalysis modification.

Belongs to the phosphatidylserine decarboxylase family. PSD-B subfamily. Prokaryotic type I sub-subfamily. As to quaternary structure, heterodimer of a large membrane-associated beta subunit and a small pyruvoyl-containing alpha subunit. Pyruvate serves as cofactor. In terms of processing, is synthesized initially as an inactive proenzyme. Formation of the active enzyme involves a self-maturation process in which the active site pyruvoyl group is generated from an internal serine residue via an autocatalytic post-translational modification. Two non-identical subunits are generated from the proenzyme in this reaction, and the pyruvate is formed at the N-terminus of the alpha chain, which is derived from the carboxyl end of the proenzyme. The autoendoproteolytic cleavage occurs by a canonical serine protease mechanism, in which the side chain hydroxyl group of the serine supplies its oxygen atom to form the C-terminus of the beta chain, while the remainder of the serine residue undergoes an oxidative deamination to produce ammonia and the pyruvoyl prosthetic group on the alpha chain. During this reaction, the Ser that is part of the protease active site of the proenzyme becomes the pyruvoyl prosthetic group, which constitutes an essential element of the active site of the mature decarboxylase.

The protein resides in the cell membrane. The enzyme catalyses a 1,2-diacyl-sn-glycero-3-phospho-L-serine + H(+) = a 1,2-diacyl-sn-glycero-3-phosphoethanolamine + CO2. It functions in the pathway phospholipid metabolism; phosphatidylethanolamine biosynthesis; phosphatidylethanolamine from CDP-diacylglycerol: step 2/2. Its function is as follows. Catalyzes the formation of phosphatidylethanolamine (PtdEtn) from phosphatidylserine (PtdSer). The polypeptide is Phosphatidylserine decarboxylase proenzyme (Acinetobacter baumannii (strain ACICU)).